The chain runs to 220 residues: NADH-quinone oxidoreductase subunit I (220 aa).

4Fe-4S ferredoxin-type domains are found at residues 71-102 and 112-141; these read LQRL…IITH and DSYT…MGNR. Positions 82, 85, 88, 92, 121, 124, 127, and 131 each coordinate [4Fe-4S] cluster. The interval 189–220 is disordered; that stretch reads ATPLDYVQEPSKEESKKETPTSPEANKGDENV. The segment covering 198–207 has biased composition (basic and acidic residues); the sequence is PSKEESKKET.

This sequence belongs to the complex I 23 kDa subunit family. NDH-1 is composed of 14 different subunits. Subunits NuoA, H, J, K, L, M, N constitute the membrane sector of the complex. Requires [4Fe-4S] cluster as cofactor.

Its subcellular location is the cell inner membrane. The catalysed reaction is a quinone + NADH + 5 H(+)(in) = a quinol + NAD(+) + 4 H(+)(out). Its function is as follows. NDH-1 shuttles electrons from NADH, via FMN and iron-sulfur (Fe-S) centers, to quinones in the respiratory chain. The immediate electron acceptor for the enzyme in this species is believed to be ubiquinone. Couples the redox reaction to proton translocation (for every two electrons transferred, four hydrogen ions are translocated across the cytoplasmic membrane), and thus conserves the redox energy in a proton gradient. In Helicobacter acinonychis (strain Sheeba), this protein is NADH-quinone oxidoreductase subunit I.